The following is a 122-amino-acid chain: Large ribosomal subunit protein uL14 (122 aa).

This sequence belongs to the universal ribosomal protein uL14 family. In terms of assembly, part of the 50S ribosomal subunit. Forms a cluster with proteins L3 and L19. In the 70S ribosome, L14 and L19 interact and together make contacts with the 16S rRNA in bridges B5 and B8.

Binds to 23S rRNA. Forms part of two intersubunit bridges in the 70S ribosome. The chain is Large ribosomal subunit protein uL14 from Mycobacterium tuberculosis (strain ATCC 25177 / H37Ra).